The sequence spans 382 residues: 1-deoxy-D-xylulose 5-phosphate reductoisomerase (382 aa).

Residues Thr-10, Gly-11, Ser-12, Ile-13, Gly-36, and Asn-122 each coordinate NADPH. Lys-123 is a 1-deoxy-D-xylulose 5-phosphate binding site. Glu-124 serves as a coordination point for NADPH. Asp-148 is a binding site for Mn(2+). 4 residues coordinate 1-deoxy-D-xylulose 5-phosphate: Ser-149, Glu-150, Ser-174, and His-197. Residue Glu-150 participates in Mn(2+) binding. Residue Gly-203 participates in NADPH binding. Ser-210, Asn-215, Lys-216, and Glu-219 together coordinate 1-deoxy-D-xylulose 5-phosphate. Glu-219 provides a ligand contact to Mn(2+).

Belongs to the DXR family. Requires Mg(2+) as cofactor. It depends on Mn(2+) as a cofactor.

The catalysed reaction is 2-C-methyl-D-erythritol 4-phosphate + NADP(+) = 1-deoxy-D-xylulose 5-phosphate + NADPH + H(+). It functions in the pathway isoprenoid biosynthesis; isopentenyl diphosphate biosynthesis via DXP pathway; isopentenyl diphosphate from 1-deoxy-D-xylulose 5-phosphate: step 1/6. Its function is as follows. Catalyzes the NADPH-dependent rearrangement and reduction of 1-deoxy-D-xylulose-5-phosphate (DXP) to 2-C-methyl-D-erythritol 4-phosphate (MEP). The sequence is that of 1-deoxy-D-xylulose 5-phosphate reductoisomerase from Chlorobium phaeobacteroides (strain BS1).